We begin with the raw amino-acid sequence, 743 residues long: Putative pentatricopeptide repeat-containing protein At1g68930 (743 aa).

PPR repeat units follow at residues 40-70, 71-101, 102-132, 138-172, 173-203, 204-233, 234-268, 269-303, 304-334, 335-369, 370-404, 405-435, 436-470, 471-506, and 507-537; these read ETFL…IPQP, NLFS…LPDR, DGVT…MMRD, TRVT…GFES, YLLV…LDDR, NTVM…GMEK, DSVS…GLKM, DQYP…NFQD, HIYV…MKQK, NVVS…GIDP, DHYT…GLIH, YVTV…MNVR, DAVS…GLKP, DGVT…GIVP, and SIGH…MPFP. The type E motif stretch occupies residues 542 to 617; it reads GWTTLLSACR…EPGQSWIKWK (76 aa). Residues 618–648 form a type E(+) motif region; sequence GKLHSFSADDESSPYLDQIYAKLEELNNKII. The tract at residues 649-743 is type DYW motif; it reads DNGYKPDTSF…DGTCSCGDFW (95 aa).

The protein belongs to the PPR family. PCMP-H subfamily.

This chain is Putative pentatricopeptide repeat-containing protein At1g68930 (PCMP-H22), found in Arabidopsis thaliana (Mouse-ear cress).